The chain runs to 129 residues: Aspartate 1-decarboxylase (129 aa).

Ser-25 serves as the catalytic Schiff-base intermediate with substrate; via pyruvic acid. At Ser-25 the chain carries Pyruvic acid (Ser). Thr-57 serves as a coordination point for substrate. Tyr-58 serves as the catalytic Proton donor. 73–75 lines the substrate pocket; sequence GAA.

Belongs to the PanD family. As to quaternary structure, heterooctamer of four alpha and four beta subunits. Requires pyruvate as cofactor. Post-translationally, is synthesized initially as an inactive proenzyme, which is activated by self-cleavage at a specific serine bond to produce a beta-subunit with a hydroxyl group at its C-terminus and an alpha-subunit with a pyruvoyl group at its N-terminus.

Its subcellular location is the cytoplasm. It catalyses the reaction L-aspartate + H(+) = beta-alanine + CO2. It participates in cofactor biosynthesis; (R)-pantothenate biosynthesis; beta-alanine from L-aspartate: step 1/1. In terms of biological role, catalyzes the pyruvoyl-dependent decarboxylation of aspartate to produce beta-alanine. The sequence is that of Aspartate 1-decarboxylase from Hydrogenovibrio crunogenus (strain DSM 25203 / XCL-2) (Thiomicrospira crunogena).